A 137-amino-acid chain; its full sequence is MAQKPLSTAAAERMNLVGQDEIWKYRLKAESEARQNWPQNWGFLTTPFEELIKCEEDLPTPKPKIELPERFRIRPVTPVEKYIKVFPSPPVPQTTQGFIGWRSAVPGLNKCLELDDAIRSCKGAFARELCWPKQGVH.

Expressed in airway epithelial cells, renal tubular cells, pancreatic acinar cells and epithelial cells of the stomach, duodenum, and gallbladder (at protein level).

Its subcellular location is the cell projection. It is found in the cilium. The protein is Ciliary microtubule inner protein 1 of Homo sapiens (Human).